The sequence spans 307 residues: Ethylmalonyl-CoA decarboxylase (307 aa).

The residue at position 2 (A2) is an N-acetylalanine. K217 is subject to N6-acetyllysine; alternate. K217 is subject to N6-succinyllysine; alternate. An N6-succinyllysine modification is found at K301.

The protein belongs to the enoyl-CoA hydratase/isomerase family.

It localises to the cytoplasm. It is found in the cytosol. It catalyses the reaction (2S)-ethylmalonyl-CoA + H(+) = butanoyl-CoA + CO2. The enzyme catalyses (S)-methylmalonyl-CoA + H(+) = propanoyl-CoA + CO2. It carries out the reaction (2R)-ethylmalonyl-CoA + H(+) = butanoyl-CoA + CO2. Decarboxylates ethylmalonyl-CoA, a potentially toxic metabolite, to form butyryl-CoA, suggesting it might be involved in metabolite proofreading. Acts preferentially on (S)-ethylmalonyl-CoA but also has some activity on the (R)-isomer. Also has methylmalonyl-CoA decarboxylase activity at lower level. The protein is Ethylmalonyl-CoA decarboxylase (ECHDC1) of Homo sapiens (Human).